Consider the following 228-residue polypeptide: Lipoprotein-releasing system ATP-binding protein LolD (228 aa).

An ABC transporter domain is found at Leu-9–Arg-228. Position 44-51 (Gly-44–Ser-51) interacts with ATP.

The protein belongs to the ABC transporter superfamily. Lipoprotein translocase (TC 3.A.1.125) family. In terms of assembly, the complex is composed of two ATP-binding proteins (LolD) and two transmembrane proteins (LolC and LolE).

It is found in the cell inner membrane. In terms of biological role, part of the ABC transporter complex LolCDE involved in the translocation of mature outer membrane-directed lipoproteins, from the inner membrane to the periplasmic chaperone, LolA. Responsible for the formation of the LolA-lipoprotein complex in an ATP-dependent manner. This Protochlamydia amoebophila (strain UWE25) protein is Lipoprotein-releasing system ATP-binding protein LolD.